We begin with the raw amino-acid sequence, 236 residues long: Thiamine-phosphate synthase (236 aa).

4-amino-2-methyl-5-(diphosphooxymethyl)pyrimidine contacts are provided by residues 57–61 (QLRDK) and asparagine 89. Mg(2+) contacts are provided by aspartate 90 and aspartate 109. Serine 128 provides a ligand contact to 4-amino-2-methyl-5-(diphosphooxymethyl)pyrimidine. 2-[(2R,5Z)-2-carboxy-4-methylthiazol-5(2H)-ylidene]ethyl phosphate is bound at residue 154–156 (TPS). Lysine 157 is a 4-amino-2-methyl-5-(diphosphooxymethyl)pyrimidine binding site. 2-[(2R,5Z)-2-carboxy-4-methylthiazol-5(2H)-ylidene]ethyl phosphate is bound by residues glycine 185 and 205-206 (IS).

The protein belongs to the thiamine-phosphate synthase family. Requires Mg(2+) as cofactor.

It carries out the reaction 2-[(2R,5Z)-2-carboxy-4-methylthiazol-5(2H)-ylidene]ethyl phosphate + 4-amino-2-methyl-5-(diphosphooxymethyl)pyrimidine + 2 H(+) = thiamine phosphate + CO2 + diphosphate. The enzyme catalyses 2-(2-carboxy-4-methylthiazol-5-yl)ethyl phosphate + 4-amino-2-methyl-5-(diphosphooxymethyl)pyrimidine + 2 H(+) = thiamine phosphate + CO2 + diphosphate. The catalysed reaction is 4-methyl-5-(2-phosphooxyethyl)-thiazole + 4-amino-2-methyl-5-(diphosphooxymethyl)pyrimidine + H(+) = thiamine phosphate + diphosphate. Its pathway is cofactor biosynthesis; thiamine diphosphate biosynthesis; thiamine phosphate from 4-amino-2-methyl-5-diphosphomethylpyrimidine and 4-methyl-5-(2-phosphoethyl)-thiazole: step 1/1. Condenses 4-methyl-5-(beta-hydroxyethyl)thiazole monophosphate (THZ-P) and 2-methyl-4-amino-5-hydroxymethyl pyrimidine pyrophosphate (HMP-PP) to form thiamine monophosphate (TMP). The chain is Thiamine-phosphate synthase from Roseiflexus sp. (strain RS-1).